Reading from the N-terminus, the 416-residue chain is Phosphoglycerate kinase (416 aa).

Positions 22, 23, 24, 25, 37, 38, 61, 62, 64, 65, 120, 121, 168, and 169 each coordinate (2R)-3-phosphoglycerate. Residue glycine 212 participates in ADP binding. A CDP-binding site is contributed by glycine 212. Residues alanine 213 and lysine 214 each coordinate AMP. Alanine 213 contributes to the ATP binding site. Alanine 213 contributes to the Mg(2+) binding site. Residue aspartate 217 coordinates CDP. Mg(2+) is bound at residue aspartate 217. Residue lysine 218 coordinates AMP. Position 218 (lysine 218) interacts with ATP. Glycine 236 lines the ADP pocket. Glycine 236 is a CDP binding site. Positions 237 and 311 each coordinate AMP. Glycine 237 and glycine 311 together coordinate ATP. Positions 336 and 341 each coordinate CDP. Phenylalanine 341 contacts ADP. An AMP-binding site is contributed by glutamate 342. ATP is bound by residues glutamate 342, aspartate 373, and threonine 374. Mg(2+) is bound at residue aspartate 373.

The protein belongs to the phosphoglycerate kinase family. In terms of assembly, monomer. Mg(2+) is required as a cofactor. As to expression, expressed in all cells of the worm (at protein level), higher expression in the cells associated with the tubercles (tegumental modifications), the muscle and along the tegument.

It carries out the reaction (2R)-3-phosphoglycerate + ATP = (2R)-3-phospho-glyceroyl phosphate + ADP. It participates in carbohydrate degradation; glycolysis; pyruvate from D-glyceraldehyde 3-phosphate: step 2/5. Involved in the seventh step in glycolysis. Catalyzes the conversion of 1,3-bisphosphoglycerate ((2R)-3-phospho-glyceroyl phosphate) to 3-phosphoglycerate ((2R)-3-phosphoglycerate) and results in the formation of ATP. Associated with the tegument to provide the energy needed for the tegumental repair resulting from immune damage. This is Phosphoglycerate kinase (PGK) from Schistosoma mansoni (Blood fluke).